Consider the following 408-residue polypeptide: MAPPLAPLPPRDPNGAGPEWREPGAVSFADVAVYFCREEWGCLRPAQRALYRDVMRETYGHLSALGIGGNKPALISWVEEEAELWGPAAQDPEVAKCQTQTDPADSRNKKKERQREGTGALEKPDPVAAGSPGLKSPQAPSAGPPYGWEQLSKAPHRGRPSLCAHPPVPRADQRHGCYVCGKSFAWRSTLVEHVYSHTGEKPFHCTDCGKGFGHASSLSKHRAIHRGERPHRCLECGRAFTQRSALTSHLRVHTGEKPYGCADCGRRFSQSSALYQHRRVHSGETPFPCPDCGRAFAYPSDLRRHVRTHTGEKPYPCPDCGRCFRQSSEMAAHRRTHSGEKPYPCPQCGRRFGQKSAVAKHQWVHRPGAGGHRGRVAGRLSVTLTPGHGDLDPPVGFQLYPEIFQECG.

The region spanning 26–97 (VSFADVAVYF…AAQDPEVAKC (72 aa)) is the KRAB domain. The disordered stretch occupies residues 91–167 (DPEVAKCQTQ…GRPSLCAHPP (77 aa)). 7 consecutive C2H2-type zinc fingers follow at residues 175 to 197 (HGCY…VYSH), 203 to 225 (FHCT…RAIH), 231 to 253 (HRCL…LRVH), 259 to 281 (YGCA…RRVH), 287 to 309 (FPCP…VRTH), 315 to 337 (YPCP…RRTH), and 343 to 365 (YPCP…QWVH).

The protein belongs to the krueppel C2H2-type zinc-finger protein family. Interacts (via KRAB domain) with NR3C1/GR (via NR LBD domain); the interaction regulates transcription factor activity of NR3C1 by directing its actions toward certain biologic pathways.

Its subcellular location is the nucleus. Functionally, zinc finger protein that functions as a cofactor for steroid hormone receptors, such as NR3C1/GR. Directs NR3C1/GR transcriptional activity toward specific biologic pathways by changing NR3C1/GR binding and transcriptional activity on the glucocorticoid-responsive genes. The polypeptide is Zinc finger protein 764 (Homo sapiens (Human)).